A 301-amino-acid chain; its full sequence is Mitochondrial ornithine transporter 1 (301 aa).

Transmembrane regions (helical) follow at residues 5–25, 68–88, 110–130, 168–188, 207–227, and 237–257; these read PAIQ…ACVL, SPAL…YGFC, AAAG…TELV, GFYH…FFFF, LGPV…WLAV, and IQVL…LSIV. Solcar repeat units follow at residues 7 to 91, 104 to 197, and 207 to 293; these read IQAA…CQQV, LSDL…SRSF, and LGPV…SRKL.

This sequence belongs to the mitochondrial carrier (TC 2.A.29) family. As to expression, widely expressed, with highest levels in the liver, testis and kidney. In the brain, expressed at high levels in the hypothalamus.

It is found in the mitochondrion inner membrane. The protein localises to the mitochondrion membrane. The enzyme catalyses L-citrulline(in) + L-ornithine(out) + H(+)(in) = L-citrulline(out) + L-ornithine(in) + H(+)(out). The catalysed reaction is L-ornithine(in) + L-arginine(out) = L-ornithine(out) + L-arginine(in). It carries out the reaction L-ornithine(out) + L-lysine(in) = L-ornithine(in) + L-lysine(out). It catalyses the reaction L-lysine(out) + H(+)(in) = L-lysine(in) + H(+)(out). The enzyme catalyses L-ornithine(out) + H(+)(in) = L-ornithine(in) + H(+)(out). Its activity is regulated as follows. Inhibited by pyridoxal 5'-phosphate as well as by mercurials (mersalyl, p-chloromercuribenzene sulfonate, and mercuric chloride), N-ethylmaleimide and spermine. Functionally, mitochondrial ornithine-citrulline antiporter. Catalyzes the exchange between cytosolic ornithine and mitochondrial citrulline plus an H(+), the proton compensates the positive charge of ornithine thus leading to an electroneutral transport. Plays a crucial role in the urea cycle, by connecting the cytosolic and the intramitochondrial reactions of the urea cycle. Lysine and arginine are also transported by the antiport mechanism. In addition, catalyzes an electroneutral exchange of ornithine or lysine for H(+), a reaction driven by the pH gradient across the inner membrane. The protein is Mitochondrial ornithine transporter 1 of Mus musculus (Mouse).